Here is a 267-residue protein sequence, read N- to C-terminus: Dynein axonemal assembly factor 19 homolog (267 aa).

Disordered regions lie at residues 86–111 and 226–250; these read ISQSQLPPTTPTEVPTTSGDFTRDWR and HQGKQEQPAAAEAPHEEGGSTVDPC.

Belongs to the DNAAF19/PR46b family. Homodimer.

It localises to the cytoplasm. It is found in the cell projection. The protein localises to the cilium. The protein resides in the flagellum. Functionally, dynein-attachment factor required for cilia motility. In Chlamydomonas reinhardtii (Chlamydomonas smithii), this protein is Dynein axonemal assembly factor 19 homolog (PR46b).